A 180-amino-acid chain; its full sequence is Nucleoside triphosphate/diphosphate phosphatase (180 aa).

Catalysis depends on R26, which acts as the Proton donor. Positions 90, 106, 108, 110, 123, and 126 each coordinate Mg(2+).

It belongs to the Ntdp family. The cofactor is Mg(2+).

It catalyses the reaction a ribonucleoside 5'-triphosphate + H2O = a ribonucleoside 5'-diphosphate + phosphate + H(+). It carries out the reaction a ribonucleoside 5'-diphosphate + H2O = a ribonucleoside 5'-phosphate + phosphate + H(+). In terms of biological role, has nucleoside phosphatase activity towards nucleoside triphosphates and nucleoside diphosphates. This Staphylococcus aureus (strain MRSA252) protein is Nucleoside triphosphate/diphosphate phosphatase.